The primary structure comprises 166 residues: Putative universal stress protein SE_1385 (166 aa).

It belongs to the universal stress protein A family.

It is found in the cytoplasm. This is Putative universal stress protein SE_1385 from Staphylococcus epidermidis (strain ATCC 12228 / FDA PCI 1200).